Here is a 218-residue protein sequence, read N- to C-terminus: Glutathione S-transferase class-mu 26 kDa isozyme (218 aa).

The GST N-terminal domain maps to 1-83; sequence MAPKFGYWKV…YIADKHNMLG (83 aa). Glutathione contacts are provided by residues 7 to 8, 41 to 45, 54 to 55, and 67 to 68; these read YW, WSNDK, NL, and QS. The GST C-terminal domain occupies 85-203; that stretch reads CPKERAEISM…NSSRYIKWPL (119 aa). Residue tyrosine 111 coordinates substrate.

This sequence belongs to the GST superfamily. Mu family. In terms of assembly, homodimer. In terms of tissue distribution, tegument and in subtegumentary parenchymal cells. GST 26 may be actively excreted by adult worms.

It catalyses the reaction RX + glutathione = an S-substituted glutathione + a halide anion + H(+). In terms of biological role, conjugation of reduced glutathione to a wide number of exogenous and endogenous hydrophobic electrophiles. Functionally, GST isoenzymes appear to play a central role in the parasite detoxification system. Other functions are also suspected including a role in increasing the solubility of haematin in the parasite gut. The polypeptide is Glutathione S-transferase class-mu 26 kDa isozyme (Schistosoma mansoni (Blood fluke)).